The chain runs to 439 residues: Beta-conglycinin beta subunit 1 (439 aa).

The signal sequence occupies residues 1–23; it reads MMRVRFPLLVLLGTVFLASVCVS. Cupin type-1 domains lie at 34–193 and 240–401; these read FYLR…EEIN and FNLR…QDVE. A glycan (N-linked (GlcNAc...) asparagine) is linked at Asn351. The disordered stretch occupies residues 411–439; that stretch reads YFVDAQPQQKEEGSKGRKGPFPSILGALY. Positions 430-439 are necessary for sorting to protein storage vacuole; that stretch reads PFPSILGALY.

The protein belongs to the 7S seed storage protein family. In terms of assembly, the alpha-, alpha'-, and beta-subunits associate in various combinations to form trimeric proteins. The N-linked glycans are not essential for the folding and assembly into trimers. Expressed in seeds. Not detected in cotyledons or in mature plants.

It localises to the vacuole. Its subcellular location is the aleurone grain. The protein localises to the endoplasmic reticulum. The protein resides in the protein storage vacuole. Seed storage protein. Accumulates during seed development and is hydrolyzed after germination to provide a carbon and nitrogen source for the developing seedling. The polypeptide is Beta-conglycinin beta subunit 1 (Glycine max (Soybean)).